Reading from the N-terminus, the 354-residue chain is Glycine betaine/proline betaine transport system permease protein ProW (354 aa).

The tract at residues 1 to 41 (MADQNNPWDTTPAADSAAQSADAWGTPTTAPTDGGGADWLT) is disordered. The Cytoplasmic segment spans residues 1–99 (MADQNNPWDT…VDYILNGFQQ (99 aa)). Over residues 13 to 32 (AADSAAQSADAWGTPTTAPT) the composition is skewed to low complexity. A helical transmembrane segment spans residues 100–120 (LLLGMPAPVAIIVFALIAWQI). Residue serine 121 is a topological domain, periplasmic. A helical membrane pass occupies residues 122–142 (GVGMGVATLVSLIAIGAIGAW). Residues 143 to 148 (SQAMVT) are Cytoplasmic-facing. Residues 145 to 324 (AMVTLALVLT…ILAIILDRLT (180 aa)) form the ABC transmembrane type-1 domain. Residues 149 to 169 (LALVLTALLFCIVIGLPLGIW) form a helical membrane-spanning segment. Over 170 to 198 (LARSPRAAKIIRPLLDAMQTTPAFVYLVP) the chain is Periplasmic. A helical transmembrane segment spans residues 199–219 (IVMLFGIGNVPGVVVTIIFAL). Over 220–270 (PPIIRLTILGINQVPADLIEASRSFGASPRQMLFKVQLPLAMPTIMAGVNQ) the chain is Cytoplasmic. Residues 271 to 291 (TLMLALSMVVIASMIAVGGLG) form a helical membrane-spanning segment. At 292–300 (QMVLRGIGR) the chain is on the periplasmic side. A helical membrane pass occupies residues 301–321 (LDMGLATVGGVGIVILAIILD). The Cytoplasmic portion of the chain corresponds to 322–354 (RLTQAVGRDSRSRGNRRWYTTGPVGLLTRPFIK).

Belongs to the binding-protein-dependent transport system permease family. CysTW subfamily. In terms of assembly, the complex is composed of two ATP-binding proteins (ProV), two transmembrane proteins (ProW) and a solute-binding protein (ProX).

Its subcellular location is the cell inner membrane. Functionally, part of the ProU ABC transporter complex involved in glycine betaine and proline betaine uptake. Probably responsible for the translocation of the substrate across the membrane. This chain is Glycine betaine/proline betaine transport system permease protein ProW, found in Escherichia coli (strain K12).